The sequence spans 306 residues: UDP-3-O-acyl-N-acetylglucosamine deacetylase (306 aa).

Zn(2+) is bound by residues His-79, His-239, and Asp-243. Residue His-266 is the Proton donor of the active site.

The protein belongs to the LpxC family. Zn(2+) is required as a cofactor.

It carries out the reaction a UDP-3-O-[(3R)-3-hydroxyacyl]-N-acetyl-alpha-D-glucosamine + H2O = a UDP-3-O-[(3R)-3-hydroxyacyl]-alpha-D-glucosamine + acetate. The protein operates within glycolipid biosynthesis; lipid IV(A) biosynthesis; lipid IV(A) from (3R)-3-hydroxytetradecanoyl-[acyl-carrier-protein] and UDP-N-acetyl-alpha-D-glucosamine: step 2/6. Functionally, catalyzes the hydrolysis of UDP-3-O-myristoyl-N-acetylglucosamine to form UDP-3-O-myristoylglucosamine and acetate, the committed step in lipid A biosynthesis. The sequence is that of UDP-3-O-acyl-N-acetylglucosamine deacetylase from Actinobacillus pleuropneumoniae serotype 7 (strain AP76).